Consider the following 594-residue polypeptide: DNA ligase (594 aa).

NAD(+) is bound by residues 32–36 (DEEYD), 81–82 (SL), and glutamate 118. The N6-AMP-lysine intermediate role is filled by lysine 120. Residues arginine 141, glutamate 181, lysine 299, and lysine 323 each contribute to the NAD(+) site. Residues cysteine 417, cysteine 420, cysteine 436, and cysteine 442 each coordinate Zn(2+).

This sequence belongs to the NAD-dependent DNA ligase family. LigA subfamily. Mg(2+) is required as a cofactor. Requires Mn(2+) as cofactor.

The catalysed reaction is NAD(+) + (deoxyribonucleotide)n-3'-hydroxyl + 5'-phospho-(deoxyribonucleotide)m = (deoxyribonucleotide)n+m + AMP + beta-nicotinamide D-nucleotide.. DNA ligase that catalyzes the formation of phosphodiester linkages between 5'-phosphoryl and 3'-hydroxyl groups in double-stranded DNA using NAD as a coenzyme and as the energy source for the reaction. It is essential for DNA replication and repair of damaged DNA. The polypeptide is DNA ligase (Blochmanniella floridana).